The primary structure comprises 214 residues: Ribosomal RNA small subunit methyltransferase G (214 aa).

Residues Gly-81, Met-86, 132-133 (VE), and Arg-147 each bind S-adenosyl-L-methionine.

Belongs to the methyltransferase superfamily. RNA methyltransferase RsmG family.

The protein resides in the cytoplasm. The catalysed reaction is guanosine(527) in 16S rRNA + S-adenosyl-L-methionine = N(7)-methylguanosine(527) in 16S rRNA + S-adenosyl-L-homocysteine. Its function is as follows. Specifically methylates the N7 position of guanine in position 527 of 16S rRNA. The protein is Ribosomal RNA small subunit methyltransferase G of Ectopseudomonas mendocina (strain ymp) (Pseudomonas mendocina).